A 475-amino-acid polypeptide reads, in one-letter code: Ribonuclease Y (475 aa).

The tract at residues 34–73 is disordered; the sequence is EFERESRERRNELQRVERRLMQKEESLDKKSETLEQKDDR. Residues 165-228 enclose the KH domain; the sequence is TVTVVQLPND…EVARIALEKL (64 aa). The HD domain occupies 291–384; that stretch reads VLKHAIEVSH…VTAADAISAA (94 aa).

The protein belongs to the RNase Y family.

In terms of biological role, endoribonuclease that initiates mRNA decay. The protein is Ribonuclease Y of Alkaliphilus metalliredigens (strain QYMF).